A 507-amino-acid polypeptide reads, in one-letter code: Maturase K (507 aa).

It belongs to the intron maturase 2 family. MatK subfamily.

It is found in the plastid. The protein resides in the chloroplast. Functionally, usually encoded in the trnK tRNA gene intron. Probably assists in splicing its own and other chloroplast group II introns. This is Maturase K from Ranunculus macranthus (Large buttercup).